The following is a 270-amino-acid chain: Urease accessory protein UreD (270 aa).

This sequence belongs to the UreD family. UreD, UreF and UreG form a complex that acts as a GTP-hydrolysis-dependent molecular chaperone, activating the urease apoprotein by helping to assemble the nickel containing metallocenter of UreC. The UreE protein probably delivers the nickel.

The protein localises to the cytoplasm. Functionally, required for maturation of urease via the functional incorporation of the urease nickel metallocenter. This is Urease accessory protein UreD from Synechocystis sp. (strain ATCC 27184 / PCC 6803 / Kazusa).